The sequence spans 396 residues: Elongation factor Tu (396 aa).

In terms of domain architecture, tr-type G spans 10-206; sequence KPHVNVGTIG…ALDTYIPTPE (197 aa). Positions 19–26 are G1; it reads GHVDHGKT. 19–26 lines the GTP pocket; that stretch reads GHVDHGKT. Threonine 26 contributes to the Mg(2+) binding site. Residues 60-64 are G2; sequence GITIN. Residues 81–84 are G3; that stretch reads DCPG. GTP-binding positions include 81–85 and 136–139; these read DCPGH and NKCD. The segment at 136-139 is G4; the sequence is NKCD. A G5 region spans residues 174–176; it reads SAK.

This sequence belongs to the TRAFAC class translation factor GTPase superfamily. Classic translation factor GTPase family. EF-Tu/EF-1A subfamily. Monomer.

It localises to the cytoplasm. The catalysed reaction is GTP + H2O = GDP + phosphate + H(+). Its function is as follows. GTP hydrolase that promotes the GTP-dependent binding of aminoacyl-tRNA to the A-site of ribosomes during protein biosynthesis. This chain is Elongation factor Tu, found in Paraburkholderia xenovorans (strain LB400).